A 729-amino-acid chain; its full sequence is Disintegrin and metalloproteinase domain-containing protein 21 (729 aa).

The N-terminal stretch at 1-39 (MECFIMLGADARTLMRVTLLLLWLKALPSLIDLSQTGST) is a signal peptide. Residues 40-209 (QYLSSPEVVI…MKQNYGKLWP (170 aa)) constitute a propeptide that is removed on maturation. N-linked (GlcNAc...) asparagine glycosylation is present at Asn-169. A Cysteine switch motif is present at residues 176–183 (MLCSLTEK). A Zn(2+)-binding site is contributed by Cys-178. Over 210–685 (HMWFLELAVV…DSGPTSQKRR (476 aa)) the chain is Extracellular. One can recognise a Peptidase M12B domain in the interval 212-402 (WFLELAVVVD…NQGTCLYNHP (191 aa)). N-linked (GlcNAc...) asparagine glycosylation occurs at Asn-231. 3 disulfide bridges follow: Cys-320–Cys-397, Cys-360–Cys-382, and Cys-362–Cys-367. His-345 serves as a coordination point for Zn(2+). Glu-346 is a catalytic residue. Zn(2+)-binding residues include His-349 and His-355. N-linked (GlcNAc...) asparagine glycosylation is found at Asn-381, Asn-441, and Asn-482. The Disintegrin domain maps to 410-496 (VKRCGNGMVE…QCPEDGYVQD (87 aa)). 4 cysteine pairs are disulfide-bonded: Cys-468–Cys-488, Cys-638–Cys-649, Cys-643–Cys-655, and Cys-657–Cys-666. The EGF-like domain occupies 638-667 (CLPETCNRKGVCNNKHHCHCDYGWSPPFCL). Residues 686–706 (VIITVLSITVPVLSILICLLI) traverse the membrane as a helical segment. Over 707–729 (AGLYRIYCKIPSGPKETKASSPG) the chain is Cytoplasmic.

Requires Zn(2+) as cofactor. In terms of processing, has no obvious cleavage site for furin endopeptidase, suggesting that the proteolytic processing is regulated. Highly expressed in Leydig cells. Expressed also in cauda epididymidis, vas deferens, convoluted tubules, kidney and the parietal cells of stomach. Not detected on developing spermatocytes or mature sperm.

Its subcellular location is the membrane. Functionally, may be involved in sperm maturation and/or fertilization. May also be involved in epithelia functions associated with establishing and maintaining gradients of ions or nutrients. This chain is Disintegrin and metalloproteinase domain-containing protein 21 (Adam21), found in Mus musculus (Mouse).